The primary structure comprises 103 residues: Small ribosomal subunit protein uS14c (103 aa).

It belongs to the universal ribosomal protein uS14 family. In terms of assembly, part of the 30S ribosomal subunit.

Its subcellular location is the plastid. The protein localises to the chloroplast. Its function is as follows. Binds 16S rRNA, required for the assembly of 30S particles. The sequence is that of Small ribosomal subunit protein uS14c from Oryza nivara (Indian wild rice).